A 216-amino-acid chain; its full sequence is Adenylate kinase (216 aa).

Gly-10–Thr-15 serves as a coordination point for ATP. The NMP stretch occupies residues Ser-30–Val-59. Residues Thr-31, Arg-36, Ala-57 to Val-59, Gly-85 to Arg-88, and Gln-92 contribute to the AMP site. The LID stretch occupies residues Gly-126–Asp-163. Arg-127 contributes to the ATP binding site. Zn(2+)-binding residues include Cys-130 and Cys-133. Thr-136–Tyr-137 is an ATP binding site. Residues Cys-150 and Cys-153 each coordinate Zn(2+). AMP contacts are provided by Arg-160 and Arg-171. Position 199 (Gln-199) interacts with ATP.

It belongs to the adenylate kinase family. In terms of assembly, monomer.

It is found in the cytoplasm. The catalysed reaction is AMP + ATP = 2 ADP. It functions in the pathway purine metabolism; AMP biosynthesis via salvage pathway; AMP from ADP: step 1/1. Functionally, catalyzes the reversible transfer of the terminal phosphate group between ATP and AMP. Plays an important role in cellular energy homeostasis and in adenine nucleotide metabolism. The chain is Adenylate kinase from Bacillus mycoides (strain KBAB4) (Bacillus weihenstephanensis).